Here is a 162-residue protein sequence, read N- to C-terminus: Probable chemoreceptor glutamine deamidase CheD (162 aa).

This sequence belongs to the CheD family.

It catalyses the reaction L-glutaminyl-[protein] + H2O = L-glutamyl-[protein] + NH4(+). Its function is as follows. Probably deamidates glutamine residues to glutamate on methyl-accepting chemotaxis receptors (MCPs), playing an important role in chemotaxis. The sequence is that of Probable chemoreceptor glutamine deamidase CheD from Clostridium botulinum (strain Alaska E43 / Type E3).